Reading from the N-terminus, the 627-residue chain is UvrABC system protein C (627 aa).

The region spanning 26-105 (PSPGVYQFRN…IKELKPRYNV (80 aa)) is the GIY-YIG domain. Residues 219 to 254 (STMIRSLTSAMQLFARELKFERAAEIKMQLESLKRY) form the UVR domain.

Belongs to the UvrC family. As to quaternary structure, interacts with UvrB in an incision complex.

The protein localises to the cytoplasm. Functionally, the UvrABC repair system catalyzes the recognition and processing of DNA lesions. UvrC both incises the 5' and 3' sides of the lesion. The N-terminal half is responsible for the 3' incision and the C-terminal half is responsible for the 5' incision. This Pelodictyon phaeoclathratiforme (strain DSM 5477 / BU-1) protein is UvrABC system protein C.